A 40-amino-acid chain; its full sequence is U12-ctenitoxin-Co1a (40 aa).

Intrachain disulfides connect Cys-2–Cys-16, Cys-9–Cys-22, Cys-15–Cys-31, and Cys-24–Cys-29.

In terms of tissue distribution, expressed by the venom gland.

It localises to the secreted. In terms of biological role, insecticidal neurotoxin that reversibly inhibits the N-methyl-D-aspartate (NMDA)-subtype of ionotropic glutamate receptor (GRIN) and inhibits inactivation of insect sodium channels (Nav). In vivo, is highly toxic to insects. The polypeptide is U12-ctenitoxin-Co1a (Ctenus ornatus (Brazilian spider)).